The sequence spans 845 residues: Translation initiation factor IF-2 (845 aa).

2 stretches are compositionally biased toward basic and acidic residues: residues 139 to 198 and 206 to 228; these read EAKR…EKPA and FRSE…KELH. The interval 139–253 is disordered; it reads EAKRQAAEEE…PQKAAPAAKH (115 aa). The 168-residue stretch at 345–512 folds into the tr-type G domain; sequence SRAAVVTIMG…AILLQAEVME (168 aa). The G1 stretch occupies residues 354–361; that stretch reads GHVDHGKT. Residue 354–361 participates in GTP binding; that stretch reads GHVDHGKT. A G2 region spans residues 379 to 383; sequence GITQH. The tract at residues 400-403 is G3; that stretch reads DTPG. GTP-binding positions include 400–404 and 454–457; these read DTPGH and NKID. Residues 454–457 form a G4 region; it reads NKID. The segment at 490 to 492 is G5; the sequence is SAK.

This sequence belongs to the TRAFAC class translation factor GTPase superfamily. Classic translation factor GTPase family. IF-2 subfamily.

Its subcellular location is the cytoplasm. In terms of biological role, one of the essential components for the initiation of protein synthesis. Protects formylmethionyl-tRNA from spontaneous hydrolysis and promotes its binding to the 30S ribosomal subunits. Also involved in the hydrolysis of GTP during the formation of the 70S ribosomal complex. This chain is Translation initiation factor IF-2, found in Nitrosococcus oceani (strain ATCC 19707 / BCRC 17464 / JCM 30415 / NCIMB 11848 / C-107).